Here is a 492-residue protein sequence, read N- to C-terminus: Protein nucleotidyltransferase YdiU (492 aa).

Residues glycine 95, glycine 97, arginine 98, lysine 118, aspartate 130, glycine 131, arginine 181, and arginine 188 each contribute to the ATP site. Aspartate 257 serves as the catalytic Proton acceptor. 2 residues coordinate Mg(2+): asparagine 258 and aspartate 267. Aspartate 267 provides a ligand contact to ATP. A compositionally biased stretch (basic and acidic residues) spans 466 to 475 (YDDQPEHAEY). The segment at 466 to 492 (YDDQPEHAEYRQPPPPSEKPYQTFCGT) is disordered.

Belongs to the SELO family. The cofactor is Mg(2+). Mn(2+) is required as a cofactor.

It carries out the reaction L-seryl-[protein] + ATP = 3-O-(5'-adenylyl)-L-seryl-[protein] + diphosphate. It catalyses the reaction L-threonyl-[protein] + ATP = 3-O-(5'-adenylyl)-L-threonyl-[protein] + diphosphate. The catalysed reaction is L-tyrosyl-[protein] + ATP = O-(5'-adenylyl)-L-tyrosyl-[protein] + diphosphate. The enzyme catalyses L-histidyl-[protein] + UTP = N(tele)-(5'-uridylyl)-L-histidyl-[protein] + diphosphate. It carries out the reaction L-seryl-[protein] + UTP = O-(5'-uridylyl)-L-seryl-[protein] + diphosphate. It catalyses the reaction L-tyrosyl-[protein] + UTP = O-(5'-uridylyl)-L-tyrosyl-[protein] + diphosphate. Nucleotidyltransferase involved in the post-translational modification of proteins. It can catalyze the addition of adenosine monophosphate (AMP) or uridine monophosphate (UMP) to a protein, resulting in modifications known as AMPylation and UMPylation. The protein is Protein nucleotidyltransferase YdiU of Syntrophotalea carbinolica (strain DSM 2380 / NBRC 103641 / GraBd1) (Pelobacter carbinolicus).